Here is a 391-residue protein sequence, read N- to C-terminus: Na(+)/H(+) antiporter NhaA (391 aa).

Helical transmembrane passes span 14 to 34 (GGIILIIAAAAAMVFANLGAT), 59 to 79 (MLLWINDALMAVFFLLVGLEV), 95 to 115 (AFPVIAAIGGMVVPALLYLAF), 125 to 145 (GWAIPAATDIAFALGVLALLG), 154 to 174 (IFLMALAIIDDLGAIVIIALF), 180 to 200 (SILSLSVAAGAIAALALLNIF), 219 to 239 (VLKSGVHATLAGVIIGFFIPL), 254 to 274 (VLHPWVAFMILPLFAFANAGV), 292 to 312 (IIAGLFIGKPLGISLFCWLAL), 328 to 348 (IMAVGVLCGIGFTMSIFISTL), and 357 to 377 (LIVWAKLGILTGSLLAAFVGY).

Belongs to the NhaA Na(+)/H(+) (TC 2.A.33) antiporter family.

It is found in the cell inner membrane. The enzyme catalyses Na(+)(in) + 2 H(+)(out) = Na(+)(out) + 2 H(+)(in). Na(+)/H(+) antiporter that extrudes sodium in exchange for external protons. This Enterobacter sp. (strain 638) protein is Na(+)/H(+) antiporter NhaA.